The primary structure comprises 379 residues: MLDHPLNSLGFAKPPAATRVVVAMSGGVDSSVVAAELAAEGYDVVGVTLQLYDHGAALAKKGACCAGRDIHDARRVAETMGFPHYVLDYENTFREAVIDEFADAYLAGATPVPCIRCNERVKFKDLLQTAKDLDADCMATGHYIQRKMGPAGPELHCAADPARDQSYFLFSTTPEQLAFLRFPLGHLASKAETRALAARHGLPVADKPDSQDICFVPNGNYAEVIQKLRPGAADPGEIVDLSGRVLGEHRGVIHYTIGQRRGLGIGGLGDPLYVVRLDPERRQVIVGPKEALSTRIVPVREINWLGDAPLTSRSEWQVMAKVRSTRASREAVIRPLSDTEAEVELIAPEDGVSPGQACVFYAPGDSRILGGGWIWRGAR.

ATP-binding positions include 23-30 (AMSGGVDS) and leucine 49. The active-site Nucleophile is the cysteine 117. A disulfide bridge connects residues cysteine 117 and cysteine 214. Position 141 (glycine 141) interacts with ATP. The segment at 163 to 165 (RDQ) is interaction with tRNA. Cysteine 214 acts as the Cysteine persulfide intermediate in catalysis.

It belongs to the MnmA/TRMU family.

The protein localises to the cytoplasm. It carries out the reaction S-sulfanyl-L-cysteinyl-[protein] + uridine(34) in tRNA + AH2 + ATP = 2-thiouridine(34) in tRNA + L-cysteinyl-[protein] + A + AMP + diphosphate + H(+). Functionally, catalyzes the 2-thiolation of uridine at the wobble position (U34) of tRNA, leading to the formation of s(2)U34. This chain is tRNA-specific 2-thiouridylase MnmA, found in Cereibacter sphaeroides (strain KD131 / KCTC 12085) (Rhodobacter sphaeroides).